The primary structure comprises 116 residues: Nucleoid-associated protein PMT9312_0020 (116 aa).

It belongs to the YbaB/EbfC family. Homodimer.

It is found in the cytoplasm. The protein resides in the nucleoid. Binds to DNA and alters its conformation. May be involved in regulation of gene expression, nucleoid organization and DNA protection. The protein is Nucleoid-associated protein PMT9312_0020 of Prochlorococcus marinus (strain MIT 9312).